A 1484-amino-acid polypeptide reads, in one-letter code: Ral GTPase-activating protein subunit beta (1484 aa).

Disordered stretches follow at residues 355–437 (PRSD…APRR) and 699–728 (ENNL…PDSE). A Phosphoserine modification is found at serine 359. Residues threonine 363 and threonine 379 each carry the phosphothreonine modification. Composition is skewed to polar residues over residues 369-381 (SMPQ…TTPP), 392-428 (NKAT…TSSE), and 701-725 (NLKS…PTTP). Serine 421 and serine 710 each carry phosphoserine. Threonine 724 is subject to Phosphothreonine. Residues 1138–1382 (IGYLDLLPCR…TTLEKEVPVI (245 aa)) form the Rap-GAP domain. The residue at position 1275 (serine 1275) is a Phosphoserine. Residues 1297–1325 (PNHTDSLNSSQRLSPSSRMKKLPQGRPVP) form a disordered region. The span at 1302 to 1313 (SLNSSQRLSPSS) shows a compositional bias: low complexity.

Component of the heterodimeric RalGAP1 complex with RALGAPA1 and of the heterodimeric RalGAP2 complex with RALGAPA2. Heterodimerization is required for activity. Abundantly expressed in testis, pancreas, lung, thymus, brown fat, and white fat. Expressed at lower levels in the brain.

Functionally, non-catalytic subunit of the heterodimeric RalGAP1 and RalGAP2 complexes which act as GTPase activators for the Ras-like small GTPases RALA and RALB. This Mus musculus (Mouse) protein is Ral GTPase-activating protein subunit beta (Ralgapb).